The following is a 681-amino-acid chain: PTS system glucose-specific EIICBA component (681 aa).

The PTS EIIC type-1 domain maps to 3–414 (KKLFGQLQRI…LKYKTPGRED (412 aa)). The next 10 helical transmembrane spans lie at 16 to 36 (LMLP…GTAM), 73 to 93 (MIFA…AAIA), 126 to 146 (ILGI…GALA), 170 to 190 (FVPI…ALIW), 199 to 219 (AFST…FGFI), 273 to 293 (FMQG…LAIY), 303 to 323 (VVAG…ITEP), 328 to 348 (FLFV…LSFL), 355 to 375 (LHLG…GILP), and 383 to 403 (VIPV…FLIV). The PTS EIIB type-1 domain occupies 425 to 506 (TELPYAVLEA…QQIMNGQVVE (82 aa)). The active-site Phosphocysteine intermediate; for EIIB activity is Cys-447. The region spanning 551–655 (DQVFSEKMMG…SDITPIIVTQ (105 aa)) is the PTS EIIA type-1 domain. The Tele-phosphohistidine intermediate; for EIIA activity role is filled by His-603.

It localises to the cell membrane. The enzyme catalyses N(pros)-phospho-L-histidyl-[protein] + D-glucose(out) = D-glucose 6-phosphate(in) + L-histidyl-[protein]. Its function is as follows. The phosphoenolpyruvate-dependent sugar phosphotransferase system (sugar PTS), a major carbohydrate active transport system, catalyzes the phosphorylation of incoming sugar substrates concomitantly with their translocation across the cell membrane. This system is involved in glucose transport. This is PTS system glucose-specific EIICBA component (ptsG) from Staphylococcus aureus (strain NCTC 8325 / PS 47).